Reading from the N-terminus, the 65-residue chain is DNA-directed RNA polymerase subunit omega (65 aa).

This sequence belongs to the RNA polymerase subunit omega family. As to quaternary structure, the RNAP catalytic core consists of 2 alpha, 1 beta, 1 beta' and 1 omega subunit. When a sigma factor is associated with the core the holoenzyme is formed, which can initiate transcription.

It carries out the reaction RNA(n) + a ribonucleoside 5'-triphosphate = RNA(n+1) + diphosphate. Promotes RNA polymerase assembly. Latches the N- and C-terminal regions of the beta' subunit thereby facilitating its interaction with the beta and alpha subunits. In Baumannia cicadellinicola subsp. Homalodisca coagulata, this protein is DNA-directed RNA polymerase subunit omega.